We begin with the raw amino-acid sequence, 705 residues long: Fatty acid oxidation complex subunit alpha (705 aa).

The enoyl-CoA hydratase stretch occupies residues 1 to 190 (MSEQKAFNLK…KLGVVDACVP (190 aa)). The 3-hydroxyacyl-CoA dehydrogenase stretch occupies residues 308–705 (SKVGMVGVLG…AGEGRRFYDN (398 aa)).

In the N-terminal section; belongs to the enoyl-CoA hydratase/isomerase family. It in the central section; belongs to the 3-hydroxyacyl-CoA dehydrogenase family. Heterotetramer of two alpha chains (FadJ) and two beta chains (FadI).

The protein localises to the cytoplasm. The enzyme catalyses a (3S)-3-hydroxyacyl-CoA = a (2E)-enoyl-CoA + H2O. The catalysed reaction is a 4-saturated-(3S)-3-hydroxyacyl-CoA = a (3E)-enoyl-CoA + H2O. It catalyses the reaction a (3S)-3-hydroxyacyl-CoA + NAD(+) = a 3-oxoacyl-CoA + NADH + H(+). It carries out the reaction (3S)-3-hydroxybutanoyl-CoA = (3R)-3-hydroxybutanoyl-CoA. It functions in the pathway lipid metabolism; fatty acid beta-oxidation. Catalyzes the formation of a hydroxyacyl-CoA by addition of water on enoyl-CoA. Also exhibits 3-hydroxyacyl-CoA epimerase and 3-hydroxyacyl-CoA dehydrogenase activities. This is Fatty acid oxidation complex subunit alpha from Vibrio vulnificus (strain CMCP6).